Here is a 222-residue protein sequence, read N- to C-terminus: MASFHIRQFQERDYEQVVDMFSRGMKEHIPTAFRHLLLLPRTLLLLLGVPLALVLVSGSWLLAVVCIFFLLPFLWFLAGQPWKNYVSKCLHTDMADITKSYLSDRGSGFWVAESGGQIVGTVGALPVKDPPSGRKQLQLFRLSVSSQHRGQGIAKALVRTVLQFARDQGYTDVVLVTGLLQQGAVTLYYSMGFQKTGESFMDILTWLVDVSLIHFIYPLPSS.

The Cytoplasmic segment spans residues 1 to 35; sequence MASFHIRQFQERDYEQVVDMFSRGMKEHIPTAFRH. A helical; Signal-anchor for type II membrane protein transmembrane segment spans residues 36 to 56; that stretch reads LLLLPRTLLLLLGVPLALVLV. At 57 to 222 the chain is on the lumenal side; that stretch reads SGSWLLAVVC…IHFIYPLPSS (166 aa). Positions 62 to 217 constitute an N-acetyltransferase domain; sequence LAVVCIFFLL…VDVSLIHFIY (156 aa).

It belongs to the NAT8 family.

It localises to the endoplasmic reticulum-Golgi intermediate compartment membrane. It is found in the endoplasmic reticulum membrane. It carries out the reaction L-lysyl-[protein] + acetyl-CoA = N(6)-acetyl-L-lysyl-[protein] + CoA + H(+). The catalysed reaction is an S-substituted L-cysteine + acetyl-CoA = an N-acetyl-L-cysteine-S-conjugate + CoA + H(+). It functions in the pathway sulfur metabolism; glutathione metabolism. Endoplasmic reticulum-membrane(ER)-bound lysine N-acetyltransferase catalyzing the N6-acetylation of lysine residues in the lumen of the ER in various proteins, including PROM1 and BACE1, using acetyl-CoA as acetyl donor. Thereby, may regulate apoptosis through the acetylation and the regulation of the expression of PROM1. May also regulate amyloid beta-peptide secretion through acetylation of BACE1 and the regulation of its expression in neurons. N(6)-lysine acetylation in the ER maintains protein homeostasis and regulates reticulophagy. Alternatively, acetylates the free alpha-amino group of cysteine S-conjugates to form mercapturic acids. This is the final step in a major route for detoxification of a wide variety of reactive electrophiles which starts with their incorporation into glutathione S-conjugates. The glutathione S-conjugates are then further processed into cysteine S-conjugates and finally mercapturic acids which are water soluble and can be readily excreted in urine or bile. The polypeptide is N-acetyltransferase 8 (Nat8) (Rattus norvegicus (Rat)).